A 400-amino-acid polypeptide reads, in one-letter code: Cytoplasmic tRNA 2-thiolation protein 2 (400 aa).

It belongs to the CTU2/NCS2 family.

It localises to the cytoplasm. It participates in tRNA modification; 5-methoxycarbonylmethyl-2-thiouridine-tRNA biosynthesis. Functionally, plays a central role in 2-thiolation of mcm(5)S(2)U at tRNA wobble positions of tRNA(Lys), tRNA(Glu) and tRNA(Gln). May act by forming a heterodimer with NCS6/CTU1 that ligates sulfur from thiocarboxylated URM1 onto the uridine of tRNAs at wobble position. The chain is Cytoplasmic tRNA 2-thiolation protein 2 from Drosophila virilis (Fruit fly).